We begin with the raw amino-acid sequence, 273 residues long: MGIELLKQEHYRIFDQTSLGNTFHATQSFAMDDTLCASVATEGAAIRSWVHHETVVLGIQDARLPHLDDGIDVLHAHGFQPVIRNSGGLAVVLDAGVLNISLVLPERGGIDIDSGYEAMLALVRRMFAEETDAINAGEVVGSYCPGSYDLSIAGKKFAGISQRRVRGGVAVQIYLCVNGSGSARAQLVRDFYAAALQGETTKFVYPTVVPETMASLEELLQRPLTVEDCLVRVYRSLMELGATLTPSVLSEVENERFGVNLGRMLDRNEKVLG.

The BPL/LPL catalytic domain maps to Ala-40 to Thr-245. The active-site Acyl-thioester intermediate is the Cys-144.

The protein belongs to the octanoyltransferase LipL family.

The enzyme catalyses N(6)-octanoyl-L-lysyl-[glycine-cleavage complex H protein] + L-lysyl-[lipoyl-carrier protein] = N(6)-octanoyl-L-lysyl-[lipoyl-carrier protein] + L-lysyl-[glycine-cleavage complex H protein]. The protein operates within protein modification; protein lipoylation via endogenous pathway; protein N(6)-(lipoyl)lysine from octanoyl-[acyl-carrier-protein]. Functionally, catalyzes the amidotransfer (transamidation) of the octanoyl moiety from octanoyl-GcvH to the lipoyl domain of the E2 subunit of lipoate-dependent enzymes. This chain is Octanoyl-[GcvH]:protein N-octanoyltransferase, found in Exiguobacterium sibiricum (strain DSM 17290 / CCUG 55495 / CIP 109462 / JCM 13490 / 255-15).